The sequence spans 144 residues: UPF0102 protein sce2912 (144 aa).

The protein belongs to the UPF0102 family.

The protein is UPF0102 protein sce2912 of Sorangium cellulosum (strain So ce56) (Polyangium cellulosum (strain So ce56)).